The sequence spans 387 residues: Sorting nexin-7 (387 aa).

Residues 30-151 enclose the PX domain; the sequence is KDLFITVDEP…IFLTAQAWEL (122 aa). Residues R73, Q75, K103, and R117 each contribute to the a 1,2-diacyl-sn-glycero-3-phospho-(1D-myo-inositol-3-phosphate) site. In terms of domain architecture, BAR spans 178 to 387; sequence GVKNRPEEFM…HLEEASEDKP (210 aa).

Belongs to the sorting nexin family. In terms of assembly, heterodimer; heterodimerizes with SNX4.

The protein resides in the early endosome membrane. Its function is as follows. Involved in the regulation of endocytosis and in several stages of intracellular trafficking. Together with SNX4, involved in autophagosome assembly by regulating trafficking and recycling of phospholipid scramblase ATG9A. In Homo sapiens (Human), this protein is Sorting nexin-7.